The chain runs to 422 residues: Cell division protein DivIB (422 aa).

2 stretches are compositionally biased toward basic and acidic residues: residues 1–23 and 62–75; these read MVDW…KQEE and EEAK…DQEQ. Positions 1-77 are disordered; it reads MVDWDKEAQR…DFAKDQEQKH (77 aa). At 1-109 the chain is on the cytoplasmic side; that stretch reads MVDWDKEAQR…LQLKSVSWSR (109 aa). The chain crosses the membrane as a helical span at residues 110-130; that stretch reads LILAAAFLFMIIFSAFWLSPL. Residues 131-202 form the POTRA domain; the sequence is NRIATIEVSG…RTVEVNVQEF (72 aa). Topologically, residues 131–422 are extracellular; sequence NRIATIEVSG…TVTQTRSSNS (292 aa). The interval 329–422 is disordered; the sequence is NPLNDPFASP…TVTQTRSSNS (94 aa). Residues 338–379 are compositionally biased toward basic and acidic residues; that stretch reads PEEKASYQEKVDQAKEKSKEKQAKADKHSSESKLGDKPKPRG. Over residues 389 to 422 the composition is skewed to low complexity; it reads TSSQRQTSSQSSPRPGTNSSQQSSTVTQTRSSNS.

The protein belongs to the FtsQ/DivIB family. DivIB subfamily.

It is found in the cell membrane. Functionally, cell division protein that may be involved in stabilizing or promoting the assembly of the division complex. The sequence is that of Cell division protein DivIB from Aerococcus urinae (strain CCUG 59500 / ACS-120-V-Col10a).